Consider the following 90-residue polypeptide: Large ribosomal subunit protein eL34 (90 aa).

Zn(2+)-binding residues include Cys-36, Cys-39, Cys-72, and Cys-75. The disordered stretch occupies residues 41–72 (RPLNGVPRGRPSELRKLPKTKKRPERPYPNLC).

The protein belongs to the eukaryotic ribosomal protein eL34 family. In terms of assembly, part of the 50S ribosomal subunit. The cofactor is Zn(2+).

The chain is Large ribosomal subunit protein eL34 from Thermococcus kodakarensis (strain ATCC BAA-918 / JCM 12380 / KOD1) (Pyrococcus kodakaraensis (strain KOD1)).